Consider the following 392-residue polypeptide: Succinate--CoA ligase [ADP-forming] subunit beta (392 aa).

Residues 9-248 form the ATP-grasp domain; sequence KEILRGFGVT…TSEEDPLEVE (240 aa). Residues Lys50, 57-59, Glu103, Met106, and Glu111 contribute to the ATP site; that span reads GRG. Residues Asn203 and Asp217 each contribute to the Mg(2+) site. Residues Asn268 and 325-327 contribute to the substrate site; that span reads GIV.

The protein belongs to the succinate/malate CoA ligase beta subunit family. In terms of assembly, heterotetramer of two alpha and two beta subunits. Mg(2+) is required as a cofactor.

The enzyme catalyses succinate + ATP + CoA = succinyl-CoA + ADP + phosphate. The catalysed reaction is GTP + succinate + CoA = succinyl-CoA + GDP + phosphate. It participates in carbohydrate metabolism; tricarboxylic acid cycle; succinate from succinyl-CoA (ligase route): step 1/1. Its function is as follows. Succinyl-CoA synthetase functions in the citric acid cycle (TCA), coupling the hydrolysis of succinyl-CoA to the synthesis of either ATP or GTP and thus represents the only step of substrate-level phosphorylation in the TCA. The beta subunit provides nucleotide specificity of the enzyme and binds the substrate succinate, while the binding sites for coenzyme A and phosphate are found in the alpha subunit. This chain is Succinate--CoA ligase [ADP-forming] subunit beta, found in Chloroherpeton thalassium (strain ATCC 35110 / GB-78).